Consider the following 330-residue polypeptide: N-acetyl-gamma-glutamyl-phosphate reductase (330 aa).

Residue cysteine 143 is part of the active site.

Belongs to the NAGSA dehydrogenase family. Type 1 subfamily.

It is found in the cytoplasm. It catalyses the reaction N-acetyl-L-glutamate 5-semialdehyde + phosphate + NADP(+) = N-acetyl-L-glutamyl 5-phosphate + NADPH + H(+). It functions in the pathway amino-acid biosynthesis; L-arginine biosynthesis; N(2)-acetyl-L-ornithine from L-glutamate: step 3/4. Catalyzes the NADPH-dependent reduction of N-acetyl-5-glutamyl phosphate to yield N-acetyl-L-glutamate 5-semialdehyde. This Methanocorpusculum labreanum (strain ATCC 43576 / DSM 4855 / Z) protein is N-acetyl-gamma-glutamyl-phosphate reductase.